A 668-amino-acid chain; its full sequence is Nuclear pore complex protein Nup75 (668 aa).

It belongs to the nucleoporin Nup85 family. Component of the nuclear pore complex (NPC). Component of the NPC Nup107-160 subcomplex.

It is found in the nucleus. The protein localises to the nuclear pore complex. It localises to the nucleus membrane. In terms of biological role, component of the nuclear pore complex (NPC) that seems to be required for NPC assembly and maintenance. Required for nuclear import of phosphorylated Mad via importin msk. Has no role in classical nuclear localization signal (cNLS)-dependent nuclear import via importin-beta. Facilitates the interaction between Nup93 and sec13 with msk. This Drosophila melanogaster (Fruit fly) protein is Nuclear pore complex protein Nup75.